The following is a 153-amino-acid chain: 3-hydroxyacyl-[acyl-carrier-protein] dehydratase FabZ (153 aa).

The active site involves His54.

It belongs to the thioester dehydratase family. FabZ subfamily.

Its subcellular location is the cytoplasm. It carries out the reaction a (3R)-hydroxyacyl-[ACP] = a (2E)-enoyl-[ACP] + H2O. In terms of biological role, involved in unsaturated fatty acids biosynthesis. Catalyzes the dehydration of short chain beta-hydroxyacyl-ACPs and long chain saturated and unsaturated beta-hydroxyacyl-ACPs. The polypeptide is 3-hydroxyacyl-[acyl-carrier-protein] dehydratase FabZ (Shewanella sediminis (strain HAW-EB3)).